The following is a 317-amino-acid chain: Protease 7 (317 aa).

The signal sequence occupies residues 1–20 (MRAKLLGIVLTTPIAISSFA). Residues 21–31 (STETLSFTPDN) lie on the Periplasmic side of the membrane. The chain crosses the membrane as a beta stranded span at residues 32–41 (INADISLGTL). At 42 to 69 (SGKTKERVYLAEEGGRKVSQLDWKFNNA) the chain is on the extracellular side. The beta stranded transmembrane segment at 70-78 (AIIKGAINW) threads the bilayer. Residues 79–83 (DLMPQ) lie on the Periplasmic side of the membrane. The chain crosses the membrane as a beta stranded span at residues 84–92 (ISIGAAGWT). Residues 93-130 (TLGSRGGNMVDQDWMDSSNPGTWTDESRHPDTQLNYAN) are Extracellular-facing. Residues aspartate 103 and aspartate 105 contribute to the active site. Residues 131-140 (EFDLNIKGWL) form a beta stranded membrane-spanning segment. Topologically, residues 141 to 145 (LNEPN) are periplasmic. Residues 146 to 156 (YRLGLMAGYQE) traverse the membrane as a beta stranded segment. Residues 157–197 (SRYSFTARGGSYIYSSEEGFRDDIGSFPNGERAIGYKQRFK) lie on the Extracellular side of the membrane. A beta stranded transmembrane segment spans residues 198–209 (MPYIGLTGSYRY). Residues 210–211 (ED) lie on the Periplasmic side of the membrane. The chain crosses the membrane as a beta stranded span at residues 212-221 (FELGGTFKYS). Over 222-250 (GWVEASDNDEHYDPGKRITYRSKVKDQNY) the chain is Extracellular. Residues aspartate 230 and histidine 232 contribute to the active site. A beta stranded membrane pass occupies residues 251-261 (YSVSVNAGYYV). Topologically, residues 262-264 (TPN) are periplasmic. The chain crosses the membrane as a beta stranded span at residues 265–274 (AKVYVEGTWN). The Extracellular segment spans residues 275–306 (RVTNKKGNTSLYDHNDNTSDYSKNGAGIENYN). The beta stranded transmembrane segment at 307-316 (FITTAGLKYT) threads the bilayer. Phenylalanine 317 is a topological domain (periplasmic).

This sequence belongs to the peptidase A26 family. Homopentamer.

The protein localises to the cell outer membrane. It carries out the reaction Has a virtual requirement for Arg in the P1 position and a slightly less stringent preference for this residue in the P1' position, which can also contain Lys, Gly or Val.. Its activity is regulated as follows. Inhibited by zinc. Functionally, protease that can cleave T7 RNA polymerase, ferric enterobactin receptor protein (FEP), antimicrobial peptide protamine and other proteins. This protease has a specificity for paired basic residues. In Escherichia coli O157:H7, this protein is Protease 7 (ompT).